The primary structure comprises 269 residues: Cell cycle regulator CcrZ (269 aa).

5 residues coordinate ATP: Phe-39, His-76, Trp-77, Met-78, and Gly-80. A Brenner's motif [HXDhX3N] motif is present at residues 164–171 (HCDVNHNN). Residue Asp-166 is the Proton acceptor of the active site. The short motif at 180–203 (LYLIDWDGAMIADPAMDLGPLLYH) is the APH element.

It belongs to the aminoglycoside phosphotransferase family. As to quaternary structure, monomer in solution. Interacts with DnaA (via domains I (1-82) and III (111-326)). Interacts with DnaB. Interacts with FtsZ.

It localises to the cytoplasm. The enzyme catalyses D-ribose + ATP = D-ribose 5-phosphate + ADP + H(+). It catalyses the reaction 2-deoxy-D-ribose + ATP = 2-deoxy-D-ribose 5-phosphate + ADP + H(+). Activated by D-ribose and 2-deoxy-D-ribose. Slightly activated by kanamycin and gentamicin. Its function is as follows. Plays a role in cell cycle regulation and chromosome integrity. Activates DnaA-dependent chromosomal DNA replication initiation ensuring that the chromosome is replicated at the right time during the cell cycle. May regulate replication initiation through phosphorylation of a possible second messenger or metabolite, and by interacting with replication initiation proteins. Has ATPase activity with D-ribose and 2-deoxy-D-ribose in vitro, but not with choline. Involved in DNA damage response. The protein is Cell cycle regulator CcrZ of Bacillus subtilis (strain 168).